A 462-amino-acid polypeptide reads, in one-letter code: B3 domain-containing protein REM8 (462 aa).

DNA-binding regions (TF-B3) lie at residues 11–103 (NKHF…LGPS), 148–243 (CFSQ…LCSR), and 249–346 (FVKL…FSKI). The disordered stretch occupies residues 351–419 (FEAEDRRHKR…NLQKTQACSV (69 aa)). Positions 369-397 (ETDKGEPSRATKMGPELEKREKTAEKGEP) are enriched in basic and acidic residues. Over residues 399–418 (RASNKSSGKQGNLQKTQACS) the composition is skewed to polar residues.

The protein localises to the nucleus. This is B3 domain-containing protein REM8 (REM8) from Arabidopsis thaliana (Mouse-ear cress).